Consider the following 794-residue polypeptide: DNA ligase (794 aa).

Residues 35–39 (DAEYD), 84–85 (SL), and E126 each bind NAD(+). K128 serves as the catalytic N6-AMP-lysine intermediate. Residues R149, E186, K302, and K326 each coordinate NAD(+). Residues C420, C423, C450, and C456 each contribute to the Zn(2+) site. Positions 711 to 794 (VEGLPLAGQT…KLFDEHGVAR (84 aa)) constitute a BRCT domain.

This sequence belongs to the NAD-dependent DNA ligase family. LigA subfamily. Mg(2+) serves as cofactor. Requires Mn(2+) as cofactor.

It catalyses the reaction NAD(+) + (deoxyribonucleotide)n-3'-hydroxyl + 5'-phospho-(deoxyribonucleotide)m = (deoxyribonucleotide)n+m + AMP + beta-nicotinamide D-nucleotide.. Functionally, DNA ligase that catalyzes the formation of phosphodiester linkages between 5'-phosphoryl and 3'-hydroxyl groups in double-stranded DNA using NAD as a coenzyme and as the energy source for the reaction. It is essential for DNA replication and repair of damaged DNA. The sequence is that of DNA ligase from Pseudomonas aeruginosa (strain LESB58).